A 371-amino-acid chain; its full sequence is Peptide chain release factor 2 (371 aa).

Position 253 is an N5-methylglutamine (Q253).

It belongs to the prokaryotic/mitochondrial release factor family. Post-translationally, methylated by PrmC. Methylation increases the termination efficiency of RF2.

It localises to the cytoplasm. In terms of biological role, peptide chain release factor 2 directs the termination of translation in response to the peptide chain termination codons UGA and UAA. This is Peptide chain release factor 2 from Mycobacterium sp. (strain KMS).